Consider the following 289-residue polypeptide: 4-diphosphocytidyl-2-C-methyl-D-erythritol kinase (289 aa).

Residue Lys-10 is part of the active site. Residue 94 to 104 (PVAAGLAGGSS) coordinates ATP. Residue Asp-136 is part of the active site.

This sequence belongs to the GHMP kinase family. IspE subfamily.

The catalysed reaction is 4-CDP-2-C-methyl-D-erythritol + ATP = 4-CDP-2-C-methyl-D-erythritol 2-phosphate + ADP + H(+). The protein operates within isoprenoid biosynthesis; isopentenyl diphosphate biosynthesis via DXP pathway; isopentenyl diphosphate from 1-deoxy-D-xylulose 5-phosphate: step 3/6. Functionally, catalyzes the phosphorylation of the position 2 hydroxy group of 4-diphosphocytidyl-2C-methyl-D-erythritol. The chain is 4-diphosphocytidyl-2-C-methyl-D-erythritol kinase from Bacillus anthracis.